Consider the following 453-residue polypeptide: MERTCLAVILAAGDSTRMKSSKSKVLHPVAGRPMIAHVVEAVASAGISSVALVVGRDAEDVAKAASIAGVDIESFLQKERLGTGHAVLAAREAIAKGYDDILVTYGDVPLQTDGPLKAARQGLADGSDVVVIGFHTDRPTGYGRLLVKDGELIAIREEKDATDAERTVTWCNSGLMAINGRKALDLLSRIGNANAKGEFYLTDLVEIARSLGGRVTAVDAPEIEMTGCNTRAELAVIERFWQERRRHQMMLSGVTMIAPETVFLAYDTVIGQDALIEPNVVFGPGAVIDSGAVIHAFSHIEGAHVSQGATVGPFARLRPGADLGTGSKVGNFCEVKNGRLGEGAKVNHLTYIGDAVIGAGSNIGAGTITCNYDGVNKSETVIGENAFIGSNSSLVAPVTIGDGAYIASGSVITVNVPADALALGRARQEIKTGRATLLRERALAIKAAKKAKA.

The segment at 1–231 (MERTCLAVIL…EIEMTGCNTR (231 aa)) is pyrophosphorylase. UDP-N-acetyl-alpha-D-glucosamine is bound by residues 10–13 (LAAG), lysine 24, glutamine 77, 82–83 (GT), 105–107 (YGD), glycine 143, glutamate 157, asparagine 172, and asparagine 229. Aspartate 107 is a binding site for Mg(2+). Residue asparagine 229 participates in Mg(2+) binding. Positions 232–252 (AELAVIERFWQERRRHQMMLS) are linker. An N-acetyltransferase region spans residues 253 to 453 (GVTMIAPETV…AIKAAKKAKA (201 aa)). Arginine 318 and lysine 336 together coordinate UDP-N-acetyl-alpha-D-glucosamine. The active-site Proton acceptor is histidine 348. Tyrosine 351 and asparagine 362 together coordinate UDP-N-acetyl-alpha-D-glucosamine. Acetyl-CoA-binding positions include alanine 365, 371 to 372 (NY), serine 390, serine 408, and arginine 425.

This sequence in the N-terminal section; belongs to the N-acetylglucosamine-1-phosphate uridyltransferase family. It in the C-terminal section; belongs to the transferase hexapeptide repeat family. Homotrimer. Requires Mg(2+) as cofactor.

It localises to the cytoplasm. It catalyses the reaction alpha-D-glucosamine 1-phosphate + acetyl-CoA = N-acetyl-alpha-D-glucosamine 1-phosphate + CoA + H(+). It carries out the reaction N-acetyl-alpha-D-glucosamine 1-phosphate + UTP + H(+) = UDP-N-acetyl-alpha-D-glucosamine + diphosphate. Its pathway is nucleotide-sugar biosynthesis; UDP-N-acetyl-alpha-D-glucosamine biosynthesis; N-acetyl-alpha-D-glucosamine 1-phosphate from alpha-D-glucosamine 6-phosphate (route II): step 2/2. It participates in nucleotide-sugar biosynthesis; UDP-N-acetyl-alpha-D-glucosamine biosynthesis; UDP-N-acetyl-alpha-D-glucosamine from N-acetyl-alpha-D-glucosamine 1-phosphate: step 1/1. It functions in the pathway bacterial outer membrane biogenesis; LPS lipid A biosynthesis. In terms of biological role, catalyzes the last two sequential reactions in the de novo biosynthetic pathway for UDP-N-acetylglucosamine (UDP-GlcNAc). The C-terminal domain catalyzes the transfer of acetyl group from acetyl coenzyme A to glucosamine-1-phosphate (GlcN-1-P) to produce N-acetylglucosamine-1-phosphate (GlcNAc-1-P), which is converted into UDP-GlcNAc by the transfer of uridine 5-monophosphate (from uridine 5-triphosphate), a reaction catalyzed by the N-terminal domain. The chain is Bifunctional protein GlmU from Rhizobium johnstonii (strain DSM 114642 / LMG 32736 / 3841) (Rhizobium leguminosarum bv. viciae).